Reading from the N-terminus, the 185-residue chain is Elongation factor P (185 aa).

This sequence belongs to the elongation factor P family.

The protein resides in the cytoplasm. It participates in protein biosynthesis; polypeptide chain elongation. In terms of biological role, involved in peptide bond synthesis. Stimulates efficient translation and peptide-bond synthesis on native or reconstituted 70S ribosomes in vitro. Probably functions indirectly by altering the affinity of the ribosome for aminoacyl-tRNA, thus increasing their reactivity as acceptors for peptidyl transferase. The chain is Elongation factor P from Trichormus variabilis (strain ATCC 29413 / PCC 7937) (Anabaena variabilis).